Consider the following 129-residue polypeptide: Small ribosomal subunit protein uS11c (129 aa).

Belongs to the universal ribosomal protein uS11 family. As to quaternary structure, part of the 30S ribosomal subunit.

The protein resides in the plastid. It localises to the chloroplast. This Gracilaria tenuistipitata var. liui (Red alga) protein is Small ribosomal subunit protein uS11c.